We begin with the raw amino-acid sequence, 367 residues long: Anhydro-N-acetylmuramic acid kinase (367 aa).

Residue 11–18 (GTSLDGVD) coordinates ATP.

It belongs to the anhydro-N-acetylmuramic acid kinase family.

It carries out the reaction 1,6-anhydro-N-acetyl-beta-muramate + ATP + H2O = N-acetyl-D-muramate 6-phosphate + ADP + H(+). The protein operates within amino-sugar metabolism; 1,6-anhydro-N-acetylmuramate degradation. It functions in the pathway cell wall biogenesis; peptidoglycan recycling. Catalyzes the specific phosphorylation of 1,6-anhydro-N-acetylmuramic acid (anhMurNAc) with the simultaneous cleavage of the 1,6-anhydro ring, generating MurNAc-6-P. Is required for the utilization of anhMurNAc either imported from the medium or derived from its own cell wall murein, and thus plays a role in cell wall recycling. The protein is Anhydro-N-acetylmuramic acid kinase of Chromobacterium violaceum (strain ATCC 12472 / DSM 30191 / JCM 1249 / CCUG 213 / NBRC 12614 / NCIMB 9131 / NCTC 9757 / MK).